The primary structure comprises 1095 residues: Solute carrier family 12 member 1 (1095 aa).

At 1–173 (MSVNIPSNSV…EEDVTGVVKF (173 aa)) the chain is on the cytoplasmic side. An RFXV motif motif is present at residues 16-19 (RFQV). Positions 26–45 (HGSGAAMSDSTDPPHYEETS) are disordered. Phosphoserine occurs at positions 57 and 87. A phosphothreonine mark is found at Thr91, Thr96, Thr101, and Thr114. Ser116 carries the phosphoserine modification. Phosphoserine; by AMPK is present on Ser126. Ser144 is modified (phosphoserine). Residues 174–194 (GWVKGVLVRCMLNIWGVMLFI) form a helical membrane-spanning segment. Residues 195–197 (RLS) are Extracellular-facing. The chain crosses the membrane as a helical span at residues 198–218 (WIVGEAGIGLGVIIIGLSVVV). At 219–255 (TTLTGISMSAICTNGVVRGGGAYYLISRSLGPEFGGS) the chain is on the cytoplasmic side. Residues 256–276 (IGLIFRFANAVRVAMYVVGFA) form a helical membrane-spanning segment. At 277–298 (ETVVDLLKESDSMMVDPTNDIR) the chain is on the extracellular side. A helical transmembrane segment spans residues 299 to 319 (IIGSITVVILLGISVAGMEWE). Residues 320–323 (AKAQ) are Cytoplasmic-facing. Residues 324 to 344 (VILLVILLIGIANFFIGTVIP) form a helical membrane-spanning segment. Residues 345-375 (SNNEKKSRGFFNYQASIFAENFGPSFTEGEG) are Extracellular-facing. A helical transmembrane segment spans residues 376–396 (FFSVFAIFFPAATGILAGANI). Residues 397-413 (SGDLEDPQDAIPRGTML) lie on the Cytoplasmic side of the membrane. A helical membrane pass occupies residues 414 to 434 (AIFITTVAYIGVAICVRACVV). Over 435-546 (RDATGSMNDT…NNEPLRGYFL (112 aa)) the chain is Extracellular. Asn442 and Asn452 each carry an N-linked (GlcNAc...) asparagine glycan. 2 helical membrane-spanning segments follow: residues 547–567 (TFVIAMAFILIAELNVIAPII) and 568–588 (SNFFLASYALINFSCFHASYA). Topologically, residues 589 to 605 (KSPGWRPAYGIYNMWVS) are extracellular. The chain crosses the membrane as a helical span at residues 606 to 626 (LFGAILCCAVMFVINWWAAVI). Topologically, residues 627–1095 (TYVIELFLYI…NHKNVLTFYS (469 aa)) are cytoplasmic.

It belongs to the SLC12A transporter family. As to quaternary structure, when phosphorylated, interacts with PPP3CB. Post-translationally, phosphorylated at Ser-87, Thr-96 and Thr-101 by OXSR1/OSR1 and STK39/SPAK downstream of WNK kinases (WNK1, WNK2, WNK3 or WNK4), promoting its activity. In terms of tissue distribution, expressed predominantly in kidney (at protein level).

The protein resides in the apical cell membrane. The catalysed reaction is K(+)(out) + 2 chloride(out) + Na(+)(out) = K(+)(in) + 2 chloride(in) + Na(+)(in). Activated following phosphorylation by OXSR1/OSR1 and STK39/SPAK downstream of WNK kinases (WNK1, WNK2, WNK3 or WNK4). Functionally, renal sodium, potassium and chloride ion cotransporter that mediates the transepithelial NaCl reabsorption in the thick ascending limb and plays an essential role in the urinary concentration and volume regulation. Electrically silent transporter system. The sequence is that of Solute carrier family 12 member 1 (Slc12a1) from Rattus norvegicus (Rat).